Here is a 460-residue protein sequence, read N- to C-terminus: Lipase member H-B (460 aa).

Positions 1–26 (MLLSFYFNGLLLVGCLLSWGRSDTEG) are cleaved as a signal peptide. Residues Asn67 and Asn75 are each glycosylated (N-linked (GlcNAc...) asparagine). Residue Ser163 is the Nucleophile of the active site. N-linked (GlcNAc...) asparagine glycosylation is present at Asn177. Asp187 serves as the catalytic Charge relay system. Cys242 and Cys255 are joined by a disulfide. The active-site Charge relay system is the His257. Intrachain disulfides connect Cys279–Cys290 and Cys293–Cys301. An N-linked (GlcNAc...) asparagine glycan is attached at Asn289. Asn366 carries N-linked (GlcNAc...) asparagine glycosylation. A disulfide bridge connects residues Cys436 and Cys455.

The protein belongs to the AB hydrolase superfamily. Lipase family.

The protein resides in the secreted. Its subcellular location is the cell membrane. The catalysed reaction is 1-hexadecanoyl-2-(9Z-octadecenoyl)-sn-glycero-3-phosphate + H2O = 2-(9Z-octadecenoyl)-sn-glycero-3-phosphate + hexadecanoate + H(+). Hydrolyzes specifically phosphatidic acid (PA) to produce 2-acyl lysophosphatidic acid (LPA; a potent bioactive lipid mediator) and fatty acid. Does not hydrolyze other phospholipids, like phosphatidylserine (PS), phosphatidylcholine (PC) and phosphatidylethanolamine (PE) or triacylglycerol (TG). This chain is Lipase member H-B (liph-b), found in Xenopus laevis (African clawed frog).